The sequence spans 341 residues: Tryptophan--tRNA ligase (341 aa).

Residues 11–13 (RPT) and 19–20 (GH) contribute to the ATP site. A 'HIGH' region motif is present at residues 12–20 (PTGKLHIGH). An L-tryptophan-binding site is contributed by D140. ATP-binding positions include 152–154 (GED), L193, and 201–205 (KMSKS). The short motif at 201-205 (KMSKS) is the 'KMSKS' region element.

This sequence belongs to the class-I aminoacyl-tRNA synthetase family. Homodimer.

It localises to the cytoplasm. The catalysed reaction is tRNA(Trp) + L-tryptophan + ATP = L-tryptophyl-tRNA(Trp) + AMP + diphosphate + H(+). Its function is as follows. Catalyzes the attachment of tryptophan to tRNA(Trp). In Clostridium longisporum, this protein is Tryptophan--tRNA ligase.